The primary structure comprises 855 residues: Leucine--tRNA ligase (855 aa).

Positions 45–55 (PYPSGRLHMGH) match the 'HIGH' region motif. Positions 619-623 (KMSKS) match the 'KMSKS' region motif. An ATP-binding site is contributed by K622.

The protein belongs to the class-I aminoacyl-tRNA synthetase family.

The protein resides in the cytoplasm. It carries out the reaction tRNA(Leu) + L-leucine + ATP = L-leucyl-tRNA(Leu) + AMP + diphosphate. This chain is Leucine--tRNA ligase, found in Hyphomonas neptunium (strain ATCC 15444).